The chain runs to 42 residues: Photosystem I reaction center subunit IX (42 aa).

Residues 7-27 (YLSTAPVLAAIWFAILAGLLI) traverse the membrane as a helical segment.

Belongs to the PsaJ family.

The protein resides in the plastid. Its subcellular location is the chloroplast thylakoid membrane. Its function is as follows. May help in the organization of the PsaE and PsaF subunits. In Zygnema circumcarinatum (Green alga), this protein is Photosystem I reaction center subunit IX.